Reading from the N-terminus, the 132-residue chain is Salivary protein 15 Iper-2 (132 aa).

The signal sequence occupies residues 1–18; the sequence is MKVVCIIVLFVIVAVNES. N-linked (GlcNAc...) asparagine glycosylation is found at Asn-24, Asn-36, Asn-62, Asn-89, and Asn-101. The tract at residues 113-132 is CD4-binding; sequence GPNGQTCADKSQCVGHIPGC.

This sequence belongs to the salp15 family. As to quaternary structure, interacts with host CD4. Interacts with host DC-SIGN (CD209). In terms of assembly, (Microbial infection) Interacts with Borrelia outer surface protein C (OspC). Expressed in salivary glands from feeding female ticks. Highly expressed 1 day after start of feeding, and weakly expressed at the initiation of feeding and 4 days after start of feeding.

It localises to the secreted. Its function is as follows. Salivary tick protein that downregulates host immune system by binding to both dendritic cells, and CD4(+) T cells. Specifically binds to the CD4 coreceptor on T cells. This interaction prevents the activation of the Src kinase, Lck, and its downstream substrate Zap-70, and results in deficient activation of PLCgamma1, the repression of calcium fluxes triggered by T-cell antigen receptor (TCR) ligation, and a subsequent reduction in interleukin-2 production. This salivary protein also binds to DC-SIGN (CD209) on dendritic cells (DC) and activates the Raf-1 kinase/MEK signaling pathway that results in down-regulating expression of pro-inflammatory cytokines. Furthermore, it inhibits T cell proliferation induced by DCs. It also inhibits in vitro keratinocyte inflammation induced by Borrelia burgdorferi or by the major outer surface protein (OspC) of Borrelia. In addition, it downregulates chemokines and monocyte chemoattractant protein 1, as well as several antimicrobial peptides such as defensins, cathelicidin, psoriasin, and RNase 7. Apart from its immunomodulatory activities, it is also associated with protection of Borrelia spirochetes from antibody-mediated killing through its binding to OspC. In vivo, tests on different immune disease animal models show promising therapeutic results, e.g., in inhibiting HIV infection, experimental autoimmune encephalomyelitis, transplantation rejection, and asthma. (Microbial infection) Protects Borrelia garinii from anti-Borrelia antibody-mediated cytotoxicity in vitro. May facilitate B.garinii transmission in mouse model. In terms of biological role, (Microbial infection) Protects Borrelia burgdorferi from anti-Borrelia antibody-mediated cytotoxicity in vitro. Functionally, (Microbial infection) Protects Borrelia afzelii from anti-Borrelia antibody-mediated cytotoxicity in vitro. In Ixodes persulcatus (Taiga tick), this protein is Salivary protein 15 Iper-2.